A 322-amino-acid chain; its full sequence is Malate dehydrogenase (322 aa).

NAD(+) contacts are provided by residues 10–15 and Asp-34; that span reads GSGQIG. Positions 83 and 89 each coordinate substrate. Residues Asn-96 and 119–121 contribute to the NAD(+) site; that span reads ITN. Residues Asn-121 and Arg-152 each contribute to the substrate site. Catalysis depends on His-176, which acts as the Proton acceptor.

The protein belongs to the LDH/MDH superfamily. MDH type 3 family.

The enzyme catalyses (S)-malate + NAD(+) = oxaloacetate + NADH + H(+). Its function is as follows. Catalyzes the reversible oxidation of malate to oxaloacetate. This chain is Malate dehydrogenase, found in Bradyrhizobium sp. (strain BTAi1 / ATCC BAA-1182).